The following is a 161-amino-acid chain: Zinc finger A20 and AN1 domain-containing stress-associated protein 9 (161 aa).

The segment at 17–51 (PEAPILCVNNCGFFGSSMTNNMCSKCYRDFVKVTT) adopts an A20-type zinc-finger fold. Zn(2+) is bound by residues Cys23, Cys27, Cys39, and Cys42. The tract at residues 62-99 (FTPASSSKTPLEPAKPDEVPAAAVEDKQAAQEPPKPPS) is disordered. The segment covering 75 to 90 (AKPDEVPAAAVEDKQA) has biased composition (basic and acidic residues). An AN1-type zinc finger spans residues 96–142 (KPPSNRCLSCRKKVGLTGFQCRCGGTFCSTHRYTEAHDCTFDYKKAG). Residues Cys102, Cys105, Cys116, Cys118, Cys123, His126, His132, and Cys134 each coordinate Zn(2+).

Its function is as follows. May be involved in environmental stress response. The chain is Zinc finger A20 and AN1 domain-containing stress-associated protein 9 (SAP9) from Oryza sativa subsp. japonica (Rice).